Reading from the N-terminus, the 124-residue chain is Chorion class high-cysteine HCA protein 12 (124 aa).

The first 21 residues, 1–21 (MFTFALLLLCVQGCLIQNVYG), serve as a signal peptide directing secretion. Residues 22 to 35 (QCCGCGCGGGCGCG) are left arm. The tract at residues 36-83 (CYGGEGDGNVNVCGELPVCGETLVCGRVPICGGVCFKGPACASGCVSI) is central domain. The tract at residues 84–124 (CGRCCGCGCGGCGGCGCGCGGCGCGCGGCGGCGCGRRCCCC) is right arm (Gly- and Cys-rich tandem repeats).

This sequence belongs to the chorion protein family.

In terms of biological role, this protein is one of many from the eggshell of the silk moth. The chain is Chorion class high-cysteine HCA protein 12 from Bombyx mori (Silk moth).